Here is a 196-residue protein sequence, read N- to C-terminus: Lipoprotein signal peptidase (196 aa).

Positions 1–24 are disordered; it reads MAEAERIIGMPENPDVDGTDEGGS. The next 3 helical transmembrane spans lie at 40–60, 92–112, and 118–138; these read ILAL…SKML, IGEA…VVIF, and LYSL…LGNL. Residues Asp155 and Asp169 contribute to the active site. Residues 164–184 form a helical membrane-spanning segment; that stretch reads VFNLADSAIVCGGILIVILSF.

It belongs to the peptidase A8 family.

The protein localises to the cell membrane. It carries out the reaction Release of signal peptides from bacterial membrane prolipoproteins. Hydrolyzes -Xaa-Yaa-Zaa-|-(S,diacylglyceryl)Cys-, in which Xaa is hydrophobic (preferably Leu), and Yaa (Ala or Ser) and Zaa (Gly or Ala) have small, neutral side chains.. Its pathway is protein modification; lipoprotein biosynthesis (signal peptide cleavage). Its function is as follows. This protein specifically catalyzes the removal of signal peptides from prolipoproteins. This is Lipoprotein signal peptidase from Streptomyces griseus subsp. griseus (strain JCM 4626 / CBS 651.72 / NBRC 13350 / KCC S-0626 / ISP 5235).